Reading from the N-terminus, the 301-residue chain is Probable alpha-L-glutamate ligase 2 (301 aa).

The ATP-grasp domain maps to 104–287 (LQLLSRKSIG…VADKIIQFIE (184 aa)). ATP contacts are provided by residues K141, 178 to 179 (EY), D187, and 211 to 213 (RSN). Mg(2+) contacts are provided by D248, E260, and N262. Residues D248, E260, and N262 each coordinate Mn(2+).

Belongs to the RimK family. Mg(2+) is required as a cofactor. The cofactor is Mn(2+).

In Shewanella denitrificans (strain OS217 / ATCC BAA-1090 / DSM 15013), this protein is Probable alpha-L-glutamate ligase 2.